The following is a 597-amino-acid chain: Alpha-1,2-mannosyltransferase MNN2 (597 aa).

At 1–6 (MIAKQK) the chain is on the cytoplasmic side. A helical membrane pass occupies residues 7–27 (IKILIGVIIVIATYHFIVSSN). The Extracellular portion of the chain corresponds to 28–597 (VRSKDLSDLV…ETAEIPTVVS (570 aa)). A disordered region spans residues 39 to 89 (LGSSDKSTTENERPKNNIVTNNRLDNPPNEDIPHAEPDSPPQEPPKSGNKP). Residue Asn382 is glycosylated (N-linked (GlcNAc...) asparagine).

Belongs to the MNN1/MNT family. Mn(2+) is required as a cofactor.

The protein resides in the golgi apparatus membrane. Its pathway is protein modification; protein glycosylation. With respect to regulation, enzyme activity is regulated by iron. Alpha-1,2-mannosyltransferase required for cell wall integrity. Responsible for addition of the first alpha-1,2-linked mannose to form the branches on the mannan backbone of oligosaccharides. Addition of alpha-1,2-mannose is required for stabilization of the alpha-1,6-mannose backbone and hence regulates mannan fibril length; and is important for both immune recognition and virulence. Promotes iron uptake and usage along the endocytosis pathway under iron-limiting conditions. The polypeptide is Alpha-1,2-mannosyltransferase MNN2 (MNN2) (Candida albicans (strain SC5314 / ATCC MYA-2876) (Yeast)).